The following is a 292-amino-acid chain: ATP synthase gamma chain (292 aa).

Belongs to the ATPase gamma chain family. F-type ATPases have 2 components, CF(1) - the catalytic core - and CF(0) - the membrane proton channel. CF(1) has five subunits: alpha(3), beta(3), gamma(1), delta(1), epsilon(1). CF(0) has three main subunits: a, b and c.

Its subcellular location is the cell membrane. Produces ATP from ADP in the presence of a proton gradient across the membrane. The gamma chain is believed to be important in regulating ATPase activity and the flow of protons through the CF(0) complex. This Streptococcus suis (strain 05ZYH33) protein is ATP synthase gamma chain.